Consider the following 859-residue polypeptide: Leucine--tRNA ligase (859 aa).

The 'HIGH' region motif lies at 42-52; that stretch reads PYPSGRLHMGH. The short motif at 618–622 is the 'KMSKS' region element; the sequence is KMSKS. K621 is an ATP binding site.

This sequence belongs to the class-I aminoacyl-tRNA synthetase family.

It localises to the cytoplasm. It catalyses the reaction tRNA(Leu) + L-leucine + ATP = L-leucyl-tRNA(Leu) + AMP + diphosphate. This is Leucine--tRNA ligase from Shewanella baltica (strain OS185).